The sequence spans 303 residues: Probable cell division protein WhiA (303 aa).

The H-T-H motif DNA-binding region spans 272–303 (SIQQIADSIEPPLTKSGVNHRLRKINKIADDL).

This sequence belongs to the WhiA family.

Involved in cell division and chromosome segregation. The polypeptide is Probable cell division protein WhiA (Streptococcus thermophilus (strain ATCC BAA-250 / LMG 18311)).